The primary structure comprises 873 residues: Bifunctional uridylyltransferase/uridylyl-removing enzyme (873 aa).

The interval 1 to 332 is uridylyltransferase; it reads MKYLSPLSLS…HQGEQDDAII (332 aa). The uridylyl-removing stretch occupies residues 333-692; that stretch reads IDDDFQRRGR…ISKNASRGGT (360 aa). The HD domain maps to 451-573; sequence VDEHSIRLLK…VRDEERLDYL (123 aa). 2 consecutive ACT domains span residues 693 to 777 and 800 to 873; these read EIFV…RPPR and LMEF…RLSS.

The protein belongs to the GlnD family. Mg(2+) is required as a cofactor.

The enzyme catalyses [protein-PII]-L-tyrosine + UTP = [protein-PII]-uridylyl-L-tyrosine + diphosphate. It catalyses the reaction [protein-PII]-uridylyl-L-tyrosine + H2O = [protein-PII]-L-tyrosine + UMP + H(+). Its activity is regulated as follows. Uridylyltransferase (UTase) activity is inhibited by glutamine, while glutamine activates uridylyl-removing (UR) activity. Its function is as follows. Modifies, by uridylylation and deuridylylation, the PII regulatory proteins (GlnB and homologs), in response to the nitrogen status of the cell that GlnD senses through the glutamine level. Under low glutamine levels, catalyzes the conversion of the PII proteins and UTP to PII-UMP and PPi, while under higher glutamine levels, GlnD hydrolyzes PII-UMP to PII and UMP (deuridylylation). Thus, controls uridylylation state and activity of the PII proteins, and plays an important role in the regulation of nitrogen assimilation and metabolism. The polypeptide is Bifunctional uridylyltransferase/uridylyl-removing enzyme (Aliivibrio fischeri (strain ATCC 700601 / ES114) (Vibrio fischeri)).